A 134-amino-acid polypeptide reads, in one-letter code: Probable glycine cleavage system H protein (134 aa).

The 82-residue stretch at 29-110 folds into the Lipoyl-binding domain; sequence TVLVGITDYA…PYGAWIAKIK (82 aa). Residue Lys-70 is modified to N6-lipoyllysine.

Belongs to the GcvH family. In terms of assembly, the glycine cleavage system is composed of four proteins: P, T, L and H. (R)-lipoate serves as cofactor.

Its function is as follows. The glycine cleavage system catalyzes the degradation of glycine. The H protein shuttles the methylamine group of glycine from the P protein to the T protein. The polypeptide is Probable glycine cleavage system H protein (Pyrococcus abyssi (strain GE5 / Orsay)).